We begin with the raw amino-acid sequence, 965 residues long: FKBP12-associated protein 1 (965 aa).

The RING-type; degenerate zinc finger occupies C68 to Y118. 5 consecutive NF-X1-type zinc fingers follow at residues C159 to R177, C216 to E235, C362 to Q382, C468 to E487, and C586 to Q606. The 64-residue stretch at E733–D796 folds into the R3H domain. T951 is subject to Phosphothreonine. Position 958 is a phosphoserine (S958).

The protein belongs to the NFX1 family. Interacts with FPR1.

It is found in the cytoplasm. The protein resides in the nucleus. Functionally, may play a role in transcription regulation. The polypeptide is FKBP12-associated protein 1 (FAP1) (Saccharomyces cerevisiae (strain ATCC 204508 / S288c) (Baker's yeast)).